The sequence spans 159 residues: SsrA-binding protein (159 aa).

The tract at residues Lys134–Gly159 is disordered. Residues Asp137–Gly159 are compositionally biased toward basic and acidic residues.

It belongs to the SmpB family.

The protein resides in the cytoplasm. Required for rescue of stalled ribosomes mediated by trans-translation. Binds to transfer-messenger RNA (tmRNA), required for stable association of tmRNA with ribosomes. tmRNA and SmpB together mimic tRNA shape, replacing the anticodon stem-loop with SmpB. tmRNA is encoded by the ssrA gene; the 2 termini fold to resemble tRNA(Ala) and it encodes a 'tag peptide', a short internal open reading frame. During trans-translation Ala-aminoacylated tmRNA acts like a tRNA, entering the A-site of stalled ribosomes, displacing the stalled mRNA. The ribosome then switches to translate the ORF on the tmRNA; the nascent peptide is terminated with the 'tag peptide' encoded by the tmRNA and targeted for degradation. The ribosome is freed to recommence translation, which seems to be the essential function of trans-translation. This is SsrA-binding protein from Sinorhizobium fredii (strain NBRC 101917 / NGR234).